A 741-amino-acid polypeptide reads, in one-letter code: Phosphoribosylformylglycinamidine synthase subunit PurL (741 aa).

His-54 is a catalytic residue. Residues Tyr-57 and Lys-96 each contribute to the ATP site. Glu-98 is a binding site for Mg(2+). Substrate contacts are provided by residues 99–102 (SHNH) and Arg-121. His-100 functions as the Proton acceptor in the catalytic mechanism. Asp-122 is a binding site for Mg(2+). Substrate is bound at residue Gln-245. Asp-273 contacts Mg(2+). 317–319 (ESQ) contacts substrate. 2 residues coordinate ATP: Asp-500 and Gly-537. Asn-538 provides a ligand contact to Mg(2+). Ser-540 contacts substrate.

The protein belongs to the FGAMS family. In terms of assembly, monomer. Part of the FGAM synthase complex composed of 1 PurL, 1 PurQ and 2 PurS subunits.

Its subcellular location is the cytoplasm. It carries out the reaction N(2)-formyl-N(1)-(5-phospho-beta-D-ribosyl)glycinamide + L-glutamine + ATP + H2O = 2-formamido-N(1)-(5-O-phospho-beta-D-ribosyl)acetamidine + L-glutamate + ADP + phosphate + H(+). The protein operates within purine metabolism; IMP biosynthesis via de novo pathway; 5-amino-1-(5-phospho-D-ribosyl)imidazole from N(2)-formyl-N(1)-(5-phospho-D-ribosyl)glycinamide: step 1/2. Part of the phosphoribosylformylglycinamidine synthase complex involved in the purines biosynthetic pathway. Catalyzes the ATP-dependent conversion of formylglycinamide ribonucleotide (FGAR) and glutamine to yield formylglycinamidine ribonucleotide (FGAM) and glutamate. The FGAM synthase complex is composed of three subunits. PurQ produces an ammonia molecule by converting glutamine to glutamate. PurL transfers the ammonia molecule to FGAR to form FGAM in an ATP-dependent manner. PurS interacts with PurQ and PurL and is thought to assist in the transfer of the ammonia molecule from PurQ to PurL. The polypeptide is Phosphoribosylformylglycinamidine synthase subunit PurL (Shouchella clausii (strain KSM-K16) (Alkalihalobacillus clausii)).